The chain runs to 207 residues: Cytidylate kinase (207 aa).

Residue 7–15 (GVAASGKSS) coordinates ATP.

It belongs to the cytidylate kinase family. Type 1 subfamily.

The protein localises to the cytoplasm. It carries out the reaction CMP + ATP = CDP + ADP. It catalyses the reaction dCMP + ATP = dCDP + ADP. The chain is Cytidylate kinase from Deinococcus deserti (strain DSM 17065 / CIP 109153 / LMG 22923 / VCD115).